Here is a 105-residue protein sequence, read N- to C-terminus: Vacuolar ATPase assembly integral membrane protein VMA21 homolog (105 aa).

Positions 1 to 26 are disordered; it reads MSTKNKKAAGGNGGAPKQTRQQSHDS. Over 1 to 36 the chain is Cytoplasmic; the sequence is MSTKNKKAAGGNGGAPKQTRQQSHDSQDYSSFKTVL. A helical membrane pass occupies residues 37–57; it reads FYCMLIVFLPVLTFFVLKGFV. At 58–68 the chain is on the lumenal side; sequence LDQFLNISEVK. Residues 69-89 traverse the membrane as a helical segment; it reads VNIASAVGAVVALHIALGLYI. At 90 to 105 the chain is on the cytoplasmic side; the sequence is YRAYFGAPGSKGSKTD.

This sequence belongs to the VMA21 family.

It localises to the endoplasmic reticulum membrane. It is found in the endoplasmic reticulum-Golgi intermediate compartment membrane. The protein localises to the cytoplasmic vesicle. Its subcellular location is the COPII-coated vesicle membrane. Functionally, required for the assembly of the V0 complex of the vacuolar ATPase (V-ATPase) in the endoplasmic reticulum. This is Vacuolar ATPase assembly integral membrane protein VMA21 homolog from Drosophila sechellia (Fruit fly).